A 975-amino-acid polypeptide reads, in one-letter code: Protein HIRA (975 aa).

WD repeat units lie at residues 10-50 (RHEG…KDND), 64-103 (DHFG…GTSE), 123-162 (GHTA…CTAV), 165-204 (GHSS…LAHR), 214-256 (GSTF…ATFD), 259-331 (GHNA…PLFV), and 335-374 (FFTQ…LGYR). Low complexity predominate over residues 418–433 (KKVSSVQQFQSPPKVS). 2 disordered regions span residues 418-510 (KKVS…RSQN) and 948-975 (NVEQ…NGAS). Over residues 435 to 445 (DAPNPSTSVPN) the composition is skewed to polar residues. The segment covering 478–492 (KQREYRRPDGRKRII) has biased composition (basic and acidic residues). The span at 499–510 (PSNQDMSNRSQN) shows a compositional bias: polar residues. Residues 923–954 (ATNRKVQRLLNEFMDLLSEYEAAETNVEQMDV) adopt a coiled-coil conformation.

It belongs to the WD repeat HIR1 family.

The protein resides in the nucleus. Functionally, histone chaperone involved in maintining knox genes silencing throughout leaf development. The sequence is that of Protein HIRA from Oryza sativa subsp. japonica (Rice).